Consider the following 323-residue polypeptide: tRNA U34 carboxymethyltransferase (323 aa).

Carboxy-S-adenosyl-L-methionine contacts are provided by residues Lys93, Trp107, Lys112, Gly132, 154 to 156 (DPS), 182 to 183 (VE), Met197, Tyr201, and Arg316.

Belongs to the class I-like SAM-binding methyltransferase superfamily. CmoB family. As to quaternary structure, homotetramer.

The enzyme catalyses carboxy-S-adenosyl-L-methionine + 5-hydroxyuridine(34) in tRNA = 5-carboxymethoxyuridine(34) in tRNA + S-adenosyl-L-homocysteine + H(+). In terms of biological role, catalyzes carboxymethyl transfer from carboxy-S-adenosyl-L-methionine (Cx-SAM) to 5-hydroxyuridine (ho5U) to form 5-carboxymethoxyuridine (cmo5U) at position 34 in tRNAs. In Pseudoalteromonas atlantica (strain T6c / ATCC BAA-1087), this protein is tRNA U34 carboxymethyltransferase.